Reading from the N-terminus, the 347-residue chain is NADH-ubiquinone oxidoreductase chain 2 (347 aa).

The next 11 helical transmembrane spans lie at 3–23 (PMIL…VMMS), 25–45 (HWFL…PVLM), 59–79 (YFLT…INLI), 96–116 (TLLT…FWVP), 122–142 (VSLN…LSLL), 149–169 (VNTN…GWGG), 178–198 (IMAY…IYNP), 201–221 (SLLN…LLMF), 239–259 (IITT…PLSG), 274–294 (DSVI…FFYM), and 326–346 (MTSL…AMIL).

The protein belongs to the complex I subunit 2 family. Core subunit of respiratory chain NADH dehydrogenase (Complex I) which is composed of 45 different subunits. Interacts with TMEM242.

Its subcellular location is the mitochondrion inner membrane. It catalyses the reaction a ubiquinone + NADH + 5 H(+)(in) = a ubiquinol + NAD(+) + 4 H(+)(out). Functionally, core subunit of the mitochondrial membrane respiratory chain NADH dehydrogenase (Complex I) which catalyzes electron transfer from NADH through the respiratory chain, using ubiquinone as an electron acceptor. Essential for the catalytic activity and assembly of complex I. This chain is NADH-ubiquinone oxidoreductase chain 2, found in Sylvisorex johnstoni (Johnston's forest shrew).